A 332-amino-acid polypeptide reads, in one-letter code: MPRPVLLIHGGAGDISDSRIAGKFAGIKQALRSAWGLLSPDNGSGGGSALDAVEAAVRSMELDENFNAGYGSCLNTSGQVELEASLMEGRDLRAGCITLLRDVMHPITVARRLMEKQRHTFLGGAAAQELALATGSERLQPGALVTEGARLTLKEFEDQVAQGKDPFFARTELTDDKPVPKTDPSGETVGAVAMDASGQIVVGTSTGGITGKWPGRIGDTPILGSGTYADNCRGGVSTTGHGETLMRYNLAQRILSAMEYQGLSAQAAADKECREMTKRLGGTGGAIVVGHSGDLGISFTSRRMAWGYVQDGTIFYGIEGQVVHQEPFTLST.

Thr-188 functions as the Nucleophile in the catalytic mechanism. Substrate-binding positions include 216-219 and 239-242; these read RIGD and TGHG.

The protein belongs to the Ntn-hydrolase family. As to quaternary structure, heterodimer of an alpha and beta chain produced by autocleavage. Cleaved into an alpha and beta chain by autocatalysis; this activates the enzyme. The N-terminal residue of the beta subunit is responsible for the nucleophile hydrolase activity.

It catalyses the reaction L-asparagine + H2O = L-aspartate + NH4(+). The enzyme catalyses Cleavage of a beta-linked Asp residue from the N-terminus of a polypeptide.. In terms of biological role, has both L-asparaginase and beta-aspartyl peptidase activity. Does not have aspartylglucosaminidase activity and is inactive toward GlcNAc-L-Asn. Likewise, has no activity toward glutamine. The polypeptide is Probable isoaspartyl peptidase/L-asparaginase CG7860 (Drosophila melanogaster (Fruit fly)).